Here is a 358-residue protein sequence, read N- to C-terminus: UDP-N-acetylglucosamine--N-acetylmuramyl-(pentapeptide) pyrophosphoryl-undecaprenol N-acetylglucosamine transferase (358 aa).

UDP-N-acetyl-alpha-D-glucosamine contacts are provided by residues 11–13 (TGG), Asn124, Arg164, Ser195, and Gln291.

Belongs to the glycosyltransferase 28 family. MurG subfamily.

It localises to the cell inner membrane. It carries out the reaction di-trans,octa-cis-undecaprenyl diphospho-N-acetyl-alpha-D-muramoyl-L-alanyl-D-glutamyl-meso-2,6-diaminopimeloyl-D-alanyl-D-alanine + UDP-N-acetyl-alpha-D-glucosamine = di-trans,octa-cis-undecaprenyl diphospho-[N-acetyl-alpha-D-glucosaminyl-(1-&gt;4)]-N-acetyl-alpha-D-muramoyl-L-alanyl-D-glutamyl-meso-2,6-diaminopimeloyl-D-alanyl-D-alanine + UDP + H(+). It participates in cell wall biogenesis; peptidoglycan biosynthesis. Cell wall formation. Catalyzes the transfer of a GlcNAc subunit on undecaprenyl-pyrophosphoryl-MurNAc-pentapeptide (lipid intermediate I) to form undecaprenyl-pyrophosphoryl-MurNAc-(pentapeptide)GlcNAc (lipid intermediate II). This Leptospira interrogans serogroup Icterohaemorrhagiae serovar copenhageni (strain Fiocruz L1-130) protein is UDP-N-acetylglucosamine--N-acetylmuramyl-(pentapeptide) pyrophosphoryl-undecaprenol N-acetylglucosamine transferase.